The primary structure comprises 503 residues: Podocalyxin (503 aa).

The N-terminal stretch at Met-1–Ser-21 is a signal peptide. A disordered region spans residues Ser-19–Thr-236. Over residues His-20–Thr-50 the composition is skewed to polar residues. The Extracellular portion of the chain corresponds to His-22 to Ser-404. N-linked (GlcNAc...) asparagine glycosylation is found at Asn-25, Asn-89, and Asn-94. The span at Ser-61–Ser-91 shows a compositional bias: low complexity. Residues Thr-107–Gly-126 show a composition bias toward low complexity. A compositionally biased stretch (polar residues) spans Asp-131 to Ser-183. N-linked (GlcNAc...) asparagine glycans are attached at residues Asn-145, Asn-154, Asn-167, and Asn-206. The segment covering Ser-196–Thr-208 has biased composition (low complexity). A compositionally biased stretch (polar residues) spans Ser-222–Thr-236. Asn-303 carries N-linked (GlcNAc...) asparagine glycosylation. A helical transmembrane segment spans residues Leu-405–Tyr-425. Over Gly-426–Leu-503 the chain is Cytoplasmic. Thr-463 bears the Phosphothreonine mark. Ser-482 carries the phosphoserine modification. Thr-501 carries the phosphothreonine modification.

This sequence belongs to the podocalyxin family. As to quaternary structure, monomer; when associated with the membrane raft. Oligomer; when integrated in the apical membrane. Found in a complex with EZR, PODXL and NHERF2. Associates with the actin cytoskeleton through complex formation with EZR and NHERF2. Interacts (via the C-terminal PDZ-binding motif DTHL) with NHERF1 (via the PDZ domains); interaction is not detected in glomerular epithelium cells, take place early in the secretory pathway and is necessary for its apical membrane sorting. Interacts (via the C-terminal PDZ-binding motif DTHL) with NHERF2 (via the PDZ 1 domain); interaction is detected in glomerular epithelium cells. Interacts with EZR. N- and O-linked glycosylated. Sialoglycoprotein. As to expression, expressed in liver cells and hematopoietic cells (at protein level). Glomerular epithelium cell (podocyte).

The protein resides in the apical cell membrane. The protein localises to the cell projection. It localises to the microvillus. It is found in the membrane raft. Its subcellular location is the lamellipodium. The protein resides in the filopodium. The protein localises to the ruffle. It localises to the membrane. Involved in the regulation of both adhesion and cell morphology and cancer progression. Functions as an anti-adhesive molecule that maintains an open filtration pathway between neighboring foot processes in the podocyte by charge repulsion. Acts as a pro-adhesive molecule, enhancing the adherence of cells to immobilized ligands, increasing the rate of migration and cell-cell contacts in an integrin-dependent manner. Induces the formation of apical actin-dependent microvilli. Involved in the formation of a preapical plasma membrane subdomain to set up initial epithelial polarization and the apical lumen formation during renal tubulogenesis. Plays a role in cancer development and aggressiveness by inducing cell migration and invasion through its interaction with the actin-binding protein EZR. Affects EZR-dependent signaling events, leading to increased activities of the MAPK and PI3K pathways in cancer cells. This is Podocalyxin (Podxl) from Mus musculus (Mouse).